The primary structure comprises 1409 residues: CRISPR-associated endonuclease Cas9 (1409 aa).

Aspartate 31 serves as the catalytic For RuvC-like nuclease domain. Residues aspartate 31, glutamate 784, and glutamate 788 each contribute to the Mg(2+) site. One can recognise an HNH Cas9-type domain in the interval 792-949 (TNQGKSNSQQ…DKAGFIQRQL (158 aa)). The Proton acceptor for HNH nuclease domain role is filled by histidine 868. Histidine 1011 lines the Mg(2+) pocket. Over residues 1121-1130 (EQNHGLDRGK) the composition is skewed to basic and acidic residues. The tract at residues 1121–1151 (EQNHGLDRGKPKGLFNANLSSKPKPNSNENL) is disordered. A compositionally biased stretch (polar residues) spans 1137–1150 (ANLSSKPKPNSNEN).

This sequence belongs to the CRISPR-associated protein Cas9 family. Subtype II-A subfamily. In terms of assembly, monomer. Binds crRNA and tracrRNA. The cofactor is Mg(2+).

Only has nuclease activity when bound to both gRNAs (crRNA plus tracrRNA). CRISPR (clustered regularly interspaced short palindromic repeat) is an adaptive immune system that provides protection against mobile genetic elements (viruses, transposable elements and conjugative plasmids). CRISPR clusters contain spacers, sequences complementary to antecedent mobile elements, and target invading nucleic acids. CRISPR clusters are transcribed and processed into CRISPR RNA (crRNA). In type II CRISPR systems correct processing of pre-crRNA requires a trans-encoded small RNA (tracrRNA), endogenous ribonuclease 3 (rnc) and Cas9. The tracrRNA serves as a guide for ribonuclease 3-aided processing of pre-crRNA. Cas9/crRNA/tracrRNA endonucleolytically cleaves linear or circular dsDNA target complementary to the spacer yielding blunt ends; Cas9 is inactive in the absence of the 2 guide RNAs (gRNA). Cas9 recognizes a 3'-G-rich protospacer adjacent motif (PAM, TGGTG in this organism) in the CRISPR repeat sequences to help distinguish self versus nonself, as targets within the bacterial CRISPR locus do not have PAMs. PAM recognition is also required for catalytic activity. When the CRISPR3/cas system consisting of cas9-cas1-cas2-csn2-CRISPR3 or just cas9-CRISPR3 is expressed in E.coli it prevents plasmids homologous to spacers 1 or 2 from transforming. In Streptococcus thermophilus, this protein is CRISPR-associated endonuclease Cas9.